A 374-amino-acid polypeptide reads, in one-letter code: MAGTDREKALDAALAQIERQFGKGAVMRMGDRTNEPIEVIPTGSTALDVALGVGGIPRGRVVEVYGPESSGKTTLTLHAVANAQKAGGQVAFVDAEHALDPEYAKKLGVDIDNLILSQPDNGEQALEIVDMLVRSGALDLIVIDSVAALVPRAEIEGEMGDSHVGLQARLMSQALRKITSALNQSKTTAIFINQLREKIGVMFGSPETTTGGRALKFYASVRLDIRRIETLKDGTDAVGNRTRVKVVKNKVAPPFKQAEFDILYGQGISREGGLIDMGVENGFVRKAGAWYTYEGDQLGQGKENARNFLKDNPDLANEIEKKIKQKLGVGVHPEESATEPGADAASAAPADAAPAVPAPTTAKATKSKATAAKS.

66–73 is a binding site for ATP; sequence GPESSGKT. The segment at 326 to 374 is disordered; it reads KLGVGVHPEESATEPGADAASAAPADAAPAVPAPTTAKATKSKATAAKS. Positions 338–374 are enriched in low complexity; it reads TEPGADAASAAPADAAPAVPAPTTAKATKSKATAAKS.

It belongs to the RecA family.

Its subcellular location is the cytoplasm. Its function is as follows. Can catalyze the hydrolysis of ATP in the presence of single-stranded DNA, the ATP-dependent uptake of single-stranded DNA by duplex DNA, and the ATP-dependent hybridization of homologous single-stranded DNAs. It interacts with LexA causing its activation and leading to its autocatalytic cleavage. The polypeptide is Protein RecA (Streptomyces coelicolor (strain ATCC BAA-471 / A3(2) / M145)).